We begin with the raw amino-acid sequence, 286 residues long: 5'-3' exonuclease (286 aa).

Positions 172 to 270 constitute a 5'-3' exonuclease domain; that stretch reads IKPKEFIDFL…IKLKDIILKK (99 aa).

Its function is as follows. 5'-3' exonuclease acting preferentially on double-stranded DNA. The protein is 5'-3' exonuclease of Buchnera aphidicola subsp. Acyrthosiphon pisum (strain APS) (Acyrthosiphon pisum symbiotic bacterium).